We begin with the raw amino-acid sequence, 266 residues long: Undecaprenyl-diphosphatase (266 aa).

A run of 8 helical transmembrane segments spans residues 1–21, 39–59, 87–107, 113–133, 143–163, 187–207, 218–238, and 244–264; these read MTLF…FLPI, QGLA…MIYF, WYVI…KGWI, TALV…YADA, GLTL…LIPG, FSFL…TLDL, ALLY…YLFL, and IGML…LWFV.

It belongs to the UppP family.

It localises to the cell inner membrane. The enzyme catalyses di-trans,octa-cis-undecaprenyl diphosphate + H2O = di-trans,octa-cis-undecaprenyl phosphate + phosphate + H(+). Its function is as follows. Catalyzes the dephosphorylation of undecaprenyl diphosphate (UPP). Confers resistance to bacitracin. This chain is Undecaprenyl-diphosphatase, found in Alteromonas mediterranea (strain DSM 17117 / CIP 110805 / LMG 28347 / Deep ecotype).